A 327-amino-acid chain; its full sequence is Peptidyl-prolyl isomerase CWC27 (327 aa).

A PPIase cyclophilin-type domain is found at threonine 8–isoleucine 158. Residues alanine 223 to aspartate 307 are disordered. 2 stretches are compositionally biased toward basic and acidic residues: residues glycine 228–threonine 269 and methionine 277–proline 296.

Belongs to the cyclophilin-type PPIase family. CWC27 subfamily. In terms of assembly, associated with the spliceosome.

It is found in the cytoplasm. The protein resides in the nucleus. The enzyme catalyses [protein]-peptidylproline (omega=180) = [protein]-peptidylproline (omega=0). In terms of biological role, PPIases accelerate the folding of proteins. It catalyzes the cis-trans isomerization of proline imidic peptide bonds in oligopeptides. Involved in pre-mRNA splicing. This Debaryomyces hansenii (strain ATCC 36239 / CBS 767 / BCRC 21394 / JCM 1990 / NBRC 0083 / IGC 2968) (Yeast) protein is Peptidyl-prolyl isomerase CWC27 (CWC27).